Here is a 222-residue protein sequence, read N- to C-terminus: Peroxiredoxin (222 aa).

One can recognise a Thioredoxin domain in the interval 2–157; sequence VVLGQKFPEV…ILRLVEALQT (156 aa). Catalysis depends on Cys44, which acts as the Cysteine sulfenic acid (-SOH) intermediate. Arg120 contributes to the substrate binding site. An intrachain disulfide couples Cys211 to Cys217.

Belongs to the peroxiredoxin family. Prx6 subfamily. As to quaternary structure, homodecamer. Pentamer of dimers that assemble into a ring structure.

The protein localises to the cytoplasm. The enzyme catalyses a hydroperoxide + [thioredoxin]-dithiol = an alcohol + [thioredoxin]-disulfide + H2O. Thiol-specific peroxidase that catalyzes the reduction of hydrogen peroxide and organic hydroperoxides to water and alcohols, respectively. Plays a role in cell protection against oxidative stress by detoxifying peroxides. In Nanoarchaeum equitans (strain Kin4-M), this protein is Peroxiredoxin.